The following is a 287-amino-acid chain: Uricase (287 aa).

Catalysis depends on charge relay system residues Lys-11 and Thr-58. Thr-58, Asp-59, Phe-160, Arg-177, Val-219, Gln-220, and Asn-246 together coordinate urate. Catalysis depends on His-248, which acts as the Charge relay system. A Microbody targeting signal motif is present at residues 285 to 287 (SRL).

The protein belongs to the uricase family.

It is found in the peroxisome. It carries out the reaction urate + O2 + H2O = 5-hydroxyisourate + H2O2. The protein operates within purine metabolism; urate degradation; (S)-allantoin from urate: step 1/3. Its function is as follows. Catalyzes the oxidation of uric acid to 5-hydroxyisourate, which is further processed to form (S)-allantoin. This chain is Uricase (uox), found in Dictyostelium discoideum (Social amoeba).